A 231-amino-acid polypeptide reads, in one-letter code: Sugar fermentation stimulation protein homolog (231 aa).

The protein belongs to the SfsA family.

The polypeptide is Sugar fermentation stimulation protein homolog (Geobacter sp. (strain M21)).